Reading from the N-terminus, the 428-residue chain is E3 ubiquitin-protein ligase RNF128 (428 aa).

A signal peptide spans 1–38 (MGPPLGAGVSCRGGCGSSRLLAWCFLLALSPQAPGSRG). N-linked (GlcNAc...) asparagine glycans are attached at residues asparagine 48, asparagine 59, and asparagine 101. Positions 75 to 183 (SPLEPVAGVL…LKGTKILQSI (109 aa)) constitute a PA domain. Residues 208-228 (IFFVSVSFFIITAATVGYFIF) traverse the membrane as a helical segment. The RING-type; atypical zinc-finger motif lies at 277-318 (CAVCIELYKPNDLVRILTCNHIFHKTCVDPWLLEHRTCPMCK). The interval 346–428 (ISNSASSHEE…QETAVREIKS (83 aa)) is disordered. Over residues 416–428 (TPHQETAVREIKS) the composition is skewed to basic and acidic residues.

Auto-ubiquitinated. Controls the development of T-cell clonal anergy by ubiquitination.

The protein localises to the cytoplasm. The protein resides in the endomembrane system. Its subcellular location is the cytoskeleton. It localises to the perinuclear region. The catalysed reaction is S-ubiquitinyl-[E2 ubiquitin-conjugating enzyme]-L-cysteine + [acceptor protein]-L-lysine = [E2 ubiquitin-conjugating enzyme]-L-cysteine + N(6)-ubiquitinyl-[acceptor protein]-L-lysine.. The protein operates within protein modification; protein ubiquitination. Its function is as follows. E3 ubiquitin-protein ligase that catalyzes 'Lys-27', 'Lys-48'- or 'Lys-63'-linked polyubiquitin chains formation and plays a role in different biological processes such as modulation of immune response, cytoskeletal dynamics or protein homeostasis. Inhibits IL2 and IL4 transcription, thereby playing an important role in the induction of the anergic phenotype, a long-term stable state of T-lymphocyte unresponsiveness to antigenic stimulation associated with the blockade of interleukin production. Ubiquitinates ARPC5 with 'Lys-48' linkages and COR1A with 'Lys-63' linkages leading to their degradation, down-regulation of these cytoskeletal components results in impaired lamellipodium formation and reduced accumulation of F-actin at the immunological synapse. Functions in the patterning of the dorsal ectoderm; sensitizes ectoderm to respond to neural-inducing signals. Plays a positive role in innate immune response by promoting 'Lys-63'-linked ubiquitination of TBK1 after RNA- or DNA-virus infection. Regulates alveolar macrophage activation and neutrophil infiltration by interacting with TLR4, targeting it for degradation, and inhibiting NF-kappa-B activation, hence decreasing pro-inflammatory cytokines. Negatively regulates the IL-3/STAT5 signaling pathway by facilitating 'Lys-27'-linked polyubiquitination of IL3RA leading to its degradation via lysosomal pathway. Directly regulates the N-glycosylation process in the endoplasmic reticulum by targeting the glycosyl-transferase RPN1 for ubiquitination and degradation. Other substrates targeted for degradation by RNF128 include transmembrane proteins CD40L, CD83 or the tetraspanin CD151. The sequence is that of E3 ubiquitin-protein ligase RNF128 (RNF128) from Pongo abelii (Sumatran orangutan).